The sequence spans 237 residues: Germination-specific N-acetylmuramoyl-L-alanine amidase (237 aa).

A signal peptide spans Met-1–Asn-27. Residues Ile-43–Leu-226 enclose the MurNAc-LAA domain.

It belongs to the N-acetylmuramoyl-L-alanine amidase 3 family.

It is found in the secreted. It carries out the reaction Hydrolyzes the link between N-acetylmuramoyl residues and L-amino acid residues in certain cell-wall glycopeptides.. Functionally, cleaves the peptide side chain from the N-acetylmuramic acid residues in peptidoglycan. This is a step in the formation of muramic delta-lactam residues in spore cortex. In Bacillus subtilis (strain 168), this protein is Germination-specific N-acetylmuramoyl-L-alanine amidase (cwlD).